Here is a 407-residue protein sequence, read N- to C-terminus: Probable sodium/metabolite cotransporter BASS5, chloroplastic (407 aa).

The transit peptide at 1–57 directs the protein to the chloroplast; sequence MGVISPTETLFLKSQHRLLQPRNYSYALAFHSTRRVANFPRNSFSSLGSCSVDFPLR. 9 helical membrane passes run 101–121, 122–142, 162–184, 191–213, 222–242, 252–272, 286–306, 317–337, and 379–399; these read FIPH…PSFT, WFKP…VGIN, YIGQ…VSLF, GAGI…TFLT, IVMT…LSLL, VFGM…AGLL, PFLP…PLAL, ATIL…GYFF, and LVGV…VSLV.

Belongs to the bile acid:sodium symporter (BASS) (TC 2.A.28) family. As to expression, widely expressed.

The protein localises to the membrane. The protein resides in the plastid. It is found in the chloroplast envelope. Its function is as follows. Plastidic transporter involved in the biosynthesis of aliphatic glucosinolates by translocating the biosynthetic intermediates of Met-derived glucosinolates across chloroplast membranes. Transports short chain (C2) alpha-keto acids, such as 4-methylsulfanyl-2-oxobutanoic acid, from the cytosol to the chloroplast where they are subjected to chain elongation cycles. Also functions in the transport of chain-elongated (C3 to C8) Met derivatives from the chloroplast to the cytosol. Does not seem to be involved in the transport of indole-derived glucosinolates. This is Probable sodium/metabolite cotransporter BASS5, chloroplastic (BASS5) from Arabidopsis thaliana (Mouse-ear cress).